Here is a 376-residue protein sequence, read N- to C-terminus: Glutamate 5-kinase (376 aa).

Lys-17 is a binding site for ATP. Substrate is bound by residues Ser-56, Asp-144, and Asn-156. ATP-binding positions include 176–177 and 218–224; these read TD and TGGMQSK. Positions 283–359 constitute a PUA domain; the sequence is KGTLLLDAGA…QSREIASVLK (77 aa).

This sequence belongs to the glutamate 5-kinase family.

The protein localises to the cytoplasm. The enzyme catalyses L-glutamate + ATP = L-glutamyl 5-phosphate + ADP. It participates in amino-acid biosynthesis; L-proline biosynthesis; L-glutamate 5-semialdehyde from L-glutamate: step 1/2. Functionally, catalyzes the transfer of a phosphate group to glutamate to form L-glutamate 5-phosphate. The polypeptide is Glutamate 5-kinase (Desulfotalea psychrophila (strain LSv54 / DSM 12343)).